We begin with the raw amino-acid sequence, 247 residues long: ATP synthase subunit a, chloroplastic (247 aa).

Helical transmembrane passes span 38 to 58, 95 to 115, 134 to 154, 199 to 219, and 220 to 240; these read QVLI…IIAV, VPFI…GALL, INTT…AGLT, LVVV…VMFL, and GLFT…AYIG.

This sequence belongs to the ATPase A chain family. F-type ATPases have 2 components, CF(1) - the catalytic core - and CF(0) - the membrane proton channel. CF(1) has five subunits: alpha(3), beta(3), gamma(1), delta(1), epsilon(1). CF(0) has four main subunits: a, b, b' and c.

It is found in the plastid. The protein resides in the chloroplast thylakoid membrane. In terms of biological role, key component of the proton channel; it plays a direct role in the translocation of protons across the membrane. The sequence is that of ATP synthase subunit a, chloroplastic from Ranunculus macranthus (Large buttercup).